The following is a 334-amino-acid chain: MNIGIVNDLPLAVEAMRRAIARRPEHRVLWVATDGAQAVELCAAQPPDVVLMDLIMPKFDGIEATRRIMRSERPCAILIVTSCIGANAWRVFEAMGAGALDAVDTPRLGDGAAGDTTKLLLAKIDQIGRLLDAPGGTRLAGTAARAGGGPLIAIGASAGGPGALASILGGLPADFSAPIVIVQHVDRAFAEGMAQWLDGQTPLAVRVAREGDRPQPGVALLAATDDHLRITRAGTLEYTREPAATPYRPSVDVFFNSLTEHWPGRVIGVLLTGMGRDGAIGLKALRMKGYHTIAQDEATSAVYGMPKAAATLGAARAILPLGRIAGELAALARI.

Residues 2-120 (NIGIVNDLPL…GAAGDTTKLL (119 aa)) form the Response regulatory domain. Asp-53 is subject to 4-aspartylphosphate. Residues 145-334 (RAGGGPLIAI…AGELAALARI (190 aa)) enclose the CheB-type methylesterase domain. Catalysis depends on residues Ser-157, His-184, and Asp-277.

This sequence belongs to the CheB family. Post-translationally, phosphorylated by CheA. Phosphorylation of the N-terminal regulatory domain activates the methylesterase activity.

The protein resides in the cytoplasm. The enzyme catalyses [protein]-L-glutamate 5-O-methyl ester + H2O = L-glutamyl-[protein] + methanol + H(+). The catalysed reaction is L-glutaminyl-[protein] + H2O = L-glutamyl-[protein] + NH4(+). In terms of biological role, involved in chemotaxis. Part of a chemotaxis signal transduction system that modulates chemotaxis in response to various stimuli. Catalyzes the demethylation of specific methylglutamate residues introduced into the chemoreceptors (methyl-accepting chemotaxis proteins or MCP) by CheR. Also mediates the irreversible deamidation of specific glutamine residues to glutamic acid. The protein is Protein-glutamate methylesterase/protein-glutamine glutaminase 1 of Burkholderia lata (strain ATCC 17760 / DSM 23089 / LMG 22485 / NCIMB 9086 / R18194 / 383).